Consider the following 58-residue polypeptide: GCLDIGKTCKDDCECCGCGNVCYCPFDWFGGSWQPFGCSCAYGLKYVCAHKQKKCPNV.

Intrachain disulfides connect Cys2–Cys16, Cys9–Cys22, Cys15–Cys40, Cys24–Cys38, and Cys48–Cys55.

In terms of tissue distribution, expressed by the venom gland.

It is found in the secreted. Its function is as follows. No toxic effects on mice at dose levels of 5 ug per mouse. May be toxic to insects. This chain is U8-ctenitoxin-Pr1a, found in Phoneutria reidyi (Brazilian Amazonian armed spider).